The primary structure comprises 325 residues: ATP-dependent 6-phosphofructokinase (325 aa).

Gly12 lines the ATP pocket. Residue 22–26 (RTIVK) participates in ADP binding. Residues 73-74 (RY) and 103-106 (GDGS) each bind ATP. Asp104 is a Mg(2+) binding site. 126-128 (TID) serves as a coordination point for substrate. Asp128 acts as the Proton acceptor in catalysis. Position 155 (Arg155) interacts with ADP. Residue 170–172 (MGH) participates in substrate binding. ADP is bound by residues 186–188 (GAE), Lys213, and 215–217 (KRS). Substrate-binding positions include Glu224, Arg246, and 252–255 (HTQR).

This sequence belongs to the phosphofructokinase type A (PFKA) family. ATP-dependent PFK group I subfamily. Prokaryotic clade 'B1' sub-subfamily. In terms of assembly, homotetramer. Mg(2+) is required as a cofactor.

It localises to the cytoplasm. It carries out the reaction beta-D-fructose 6-phosphate + ATP = beta-D-fructose 1,6-bisphosphate + ADP + H(+). The protein operates within carbohydrate degradation; glycolysis; D-glyceraldehyde 3-phosphate and glycerone phosphate from D-glucose: step 3/4. With respect to regulation, allosterically activated by ADP and other diphosphonucleosides, and allosterically inhibited by phosphoenolpyruvate. Catalyzes the phosphorylation of D-fructose 6-phosphate to fructose 1,6-bisphosphate by ATP, the first committing step of glycolysis. The sequence is that of ATP-dependent 6-phosphofructokinase from Mycoplasma mobile (strain ATCC 43663 / 163K / NCTC 11711) (Mesomycoplasma mobile).